Here is a 114-residue protein sequence, read N- to C-terminus: Vacuolar morphogenesis protein 10 (114 aa).

Its subcellular location is the vacuole membrane. Functionally, required for vacuolar fusion. Involved in the early steps of the fusion pathway. This Saccharomyces cerevisiae (strain ATCC 204508 / S288c) (Baker's yeast) protein is Vacuolar morphogenesis protein 10 (VAM10).